We begin with the raw amino-acid sequence, 171 residues long: Large ribosomal subunit protein bL9 (171 aa).

This sequence belongs to the bacterial ribosomal protein bL9 family.

Functionally, binds to the 23S rRNA. The polypeptide is Large ribosomal subunit protein bL9 (Rickettsia typhi (strain ATCC VR-144 / Wilmington)).